Here is a 219-residue protein sequence, read N- to C-terminus: Rho-related protein racN (219 aa).

12–19 (GDVTIGKT) provides a ligand contact to GTP. Residues 33 to 41 (YIPTIFDNH) carry the Effector region motif. GTP contacts are provided by residues 58–62 (DTGGG) and 114–117 (TKTD). A Cysteine methyl ester modification is found at Cys216. Cys216 carries the S-geranylgeranyl cysteine lipid modification. Residues 217–219 (IIC) constitute a propeptide, removed in mature form.

It belongs to the small GTPase superfamily. Rho family.

The protein resides in the cell membrane. The polypeptide is Rho-related protein racN (racN) (Dictyostelium discoideum (Social amoeba)).